A 354-amino-acid polypeptide reads, in one-letter code: MALTTHSGKLIPELQFKAHHFIDKTTVLYGPSKTGKTVYVKHIMKILQPHIEQILVVAPSEPSNRSYEGFVHPTLIHYRLWLADKQKKNDNKGAERFLEAIWQRQTMMSSIYSRVNNIDMLKTLYHKLPIDIQQKENKNIAKVECLKAEQTDQKKEEKITSLYQQLLKKIIIQNIHMYKNLCLTEDEKFTLNYINLNPRLLLILDDCAAELHPLFTKEIFKKFFYQNRHCFISMIICCQDDTDLPANLRKNAFVSIFTNASICMSNFSRQSNRYSKQDKEYVEEISHIVFKGYRKLVYIREDENRQHFYHSTVPLPTAFSFGSKALLKLCKAVYSKEVVIDKSNPYWSKFRLTF.

Belongs to the asfivirus B354L family.

This is an uncharacterized protein from African swine fever virus (isolate Tick/South Africa/Pretoriuskop Pr4/1996) (ASFV).